A 289-amino-acid polypeptide reads, in one-letter code: Metal-staphylopine import system permease protein CntC (289 aa).

Transmembrane regions (helical) follow at residues 13 to 33 (AVIA…APLV), 77 to 97 (LLYV…LGFL), 115 to 135 (VMLA…FGMG), 194 to 214 (IAII…GFSF), and 249 to 269 (IAIV…QIAI). Residues 73–262 (IRPSLLYVFV…IIVMAFNFLS (190 aa)) form the ABC transmembrane type-1 domain.

The protein belongs to the binding-protein-dependent transport system permease family. In terms of assembly, the complex is composed of two ATP-binding proteins (CntD and CntF), two transmembrane proteins (CntB and CntC) and a solute-binding protein (CntA).

The protein resides in the cell membrane. Its activity is regulated as follows. Nickel/cobalt import is reduced in the presence of zinc. Part of the ABC transporter complex CntABCDF (Opp1) involved in the uptake of metal in complex with the metallophore staphylopine (StP). Involved in the import of divalent metals ions such as nickel, cobalt and zinc. Probably responsible for the translocation of the substrate across the membrane. Plays a major role in nickel/cobalt import in zinc-depleted conditions. Contributes to virulence. Required for full urease activity in vitro. This chain is Metal-staphylopine import system permease protein CntC, found in Staphylococcus aureus (strain NCTC 8325 / PS 47).